We begin with the raw amino-acid sequence, 172 residues long: Large ribosomal subunit protein uL10 (172 aa).

Belongs to the universal ribosomal protein uL10 family. As to quaternary structure, part of the ribosomal stalk of the 50S ribosomal subunit. The N-terminus interacts with L11 and the large rRNA to form the base of the stalk. The C-terminus forms an elongated spine to which L12 dimers bind in a sequential fashion forming a multimeric L10(L12)X complex.

In terms of biological role, forms part of the ribosomal stalk, playing a central role in the interaction of the ribosome with GTP-bound translation factors. The chain is Large ribosomal subunit protein uL10 from Rhizobium meliloti (strain 1021) (Ensifer meliloti).